The chain runs to 473 residues: Glycine--tRNA ligase (473 aa).

Residues R101 and E172 each contribute to the substrate site. ATP-binding positions include 204-206 (RNE), 214-219 (FRTREF), 289-290 (EL), and 333-336 (GVER). 219-223 (FEQME) serves as a coordination point for substrate. 329–333 (EPSVG) lines the substrate pocket.

It belongs to the class-II aminoacyl-tRNA synthetase family. In terms of assembly, homodimer.

The protein localises to the cytoplasm. The enzyme catalyses tRNA(Gly) + glycine + ATP = glycyl-tRNA(Gly) + AMP + diphosphate. Functionally, catalyzes the attachment of glycine to tRNA(Gly). This is Glycine--tRNA ligase from Ureaplasma urealyticum serovar 10 (strain ATCC 33699 / Western).